The following is a 362-amino-acid chain: 3-dehydroquinate synthase (362 aa).

It belongs to the archaeal-type DHQ synthase family.

It carries out the reaction 2-amino-2,3,7-trideoxy-D-lyxo-hept-6-ulosonate + NAD(+) + H2O = 3-dehydroquinate + NH4(+) + NADH + H(+). Its function is as follows. Catalyzes the oxidative deamination and cyclization of 2-amino-3,7-dideoxy-D-threo-hept-6-ulosonic acid (ADH) to yield 3-dehydroquinate (DHQ), which is fed into the canonical shikimic pathway of aromatic amino acid biosynthesis. The chain is 3-dehydroquinate synthase from Methanococcus aeolicus (strain ATCC BAA-1280 / DSM 17508 / OCM 812 / Nankai-3).